We begin with the raw amino-acid sequence, 228 residues long: Cutinase (228 aa).

An N-terminal signal peptide occupies residues 1 to 16 (MKFLSIISLAVSLVAA). A disulfide bridge connects residues Cys49 and Cys129. The Nucleophile role is filled by Ser140. Cys191 and Cys198 are disulfide-bonded. Asp195 is a catalytic residue. His208 acts as the Proton donor/acceptor in catalysis.

It belongs to the cutinase family. The 2 disulfide bonds play a critical role in holding the catalytic residues in juxta-position; reduction of the disulfide bridges results in the complete inactivation of the enzyme.

It localises to the secreted. It catalyses the reaction cutin + H2O = cutin monomers.. Its activity is regulated as follows. Partially inhibited by berberine; higher inhibitory effects are observed with longer chain polyester substrates. Its function is as follows. Catalyzes the hydrolysis of complex carboxylic polyesters found in the cell wall of plants. Degrades cutin, a macromolecule that forms the structure of the plant cuticle. Allows pathogenic fungi to penetrate through the cuticular barrier into the host plant during the initial stage of fungal infection. The protein is Cutinase (CUTA) of Colletotrichum truncatum (Anthracnose fungus).